Here is a 629-residue protein sequence, read N- to C-terminus: MHFHERFDVIVVGGGHAGTEAALAAARMGSKTLLLTHNIDTLGQMSCNPAIGGIGKGHLVKEIDALGGAMAIATDYAGIQFRTLNSSKGPAVRATRAQADRALYRQKIQNILQNQPNLRIFQQAVDDLIVENHQVVGVVTQMGLAFESPAVVLTTGTFLSGKIHIGLENYSGGRAGDPPAIALANRLRELPIRVGRLKTGTPPRIDANTIDFSQMTEQKGDSPLPVMSFMGDVSHHPKQISCWITHTNEKTHEIIRGGLDRSPMYSGVIEGIGPRYCPSIEDKIHRFADKSSHQIFIEPEGLNTNEIYPNGISTSLPFDVQLNLVRSIKGMENAEIMRPGYAIEYDYFDPRDLKNSLETKAINGLFFAGQINGTTGYEEAGAQGLLAGMNASLQVQGKEAWCPRRDEAYLGVLVDDLSTLGTKEPYRMFTSRAEYRLLLREDNADIRLTAKGRELGLVDDARWAEFSEKLESIELELQRLRGQWVHPNSPLIHALNPHLNTPISREASFEELLRRPEMDYSKLMQIEGFGPGLEDPQAAEQVQIQVKYSGYIQRQQEEINKAVRNENTGLPLTLDYKEVPGLSNEVIAKLNNHKPETIGQASRISGITPAAISILLVHLKKRGLLRKSA.

Residue 13 to 18 (GGGHAG) coordinates FAD. 273–287 (GPRYCPSIEDKIHRF) is an NAD(+) binding site.

It belongs to the MnmG family. As to quaternary structure, homodimer. Heterotetramer of two MnmE and two MnmG subunits. The cofactor is FAD.

The protein resides in the cytoplasm. Its function is as follows. NAD-binding protein involved in the addition of a carboxymethylaminomethyl (cmnm) group at the wobble position (U34) of certain tRNAs, forming tRNA-cmnm(5)s(2)U34. This is tRNA uridine 5-carboxymethylaminomethyl modification enzyme MnmG from Shewanella baltica (strain OS185).